A 63-amino-acid polypeptide reads, in one-letter code: Large ribosomal subunit protein bL28 (63 aa).

It belongs to the bacterial ribosomal protein bL28 family.

This chain is Large ribosomal subunit protein bL28, found in Beutenbergia cavernae (strain ATCC BAA-8 / DSM 12333 / CCUG 43141 / JCM 11478 / NBRC 16432 / NCIMB 13614 / HKI 0122).